The following is a 485-amino-acid chain: Otoconin-90 (485 aa).

The N-terminal stretch at 1–17 (MIMLLMVGMLMAPCVGA) is a signal peptide. Asn-37 carries N-linked (GlcNAc...) asparagine glycosylation. Residues 75-189 (LLQFVNSMRC…SLNFLDASFC (115 aa)) form a phospholipase A2-like 1 region. Cystine bridges form between Cys-84–Cys-144, Cys-98–Cys-189, Cys-100–Cys-116, Cys-115–Cys-171, Cys-122–Cys-164, Cys-131–Cys-157, and Cys-151–Cys-162. Asn-178 and Asn-288 each carry an N-linked (GlcNAc...) asparagine glycan. Phospholipase A2-like regions lie at residues 315–371 (MLQL…QVGC) and 383–435 (CEDH…PVSC). N-linked (GlcNAc...) asparagine glycosylation occurs at Asn-417. The tract at residues 444-485 (LASSVDSSSEENSEEAPPQMERLRRFLEKPPGPLGARPLGGK) is disordered.

Belongs to the phospholipase A2 family. Interacts with OTOL1. As to expression, in the embryo, highly expressed in the developing otocyst with weak expression in the brain. Also expressed in nonsensory epithelia of both the vestibular and cochlear portions of the developing inner ear. Not expressed in adult or embryonic macular sensory epithelia.

The protein localises to the secreted. Its function is as follows. Major protein of the otoconia, a calcium carbonate structure in the saccule and utricle of the ear. Together with OTOL1, acts as a scaffold for otoconia biomineralization: sequesters calcium and forms interconnecting fibrils between otoconia that are incorporated into the calcium crystal structure. Together with OTOL1, modulates calcite crystal morphology and growth kinetics. It is unlikely that this protein has phospholipase A2 activity. The protein is Otoconin-90 of Mus musculus (Mouse).